Consider the following 213-residue polypeptide: Nicolin-1 (213 aa).

Part of the neuronal tubulin polyglutamylase complex which contains TPGS1, TPGS2, TTLL1, LRRC49 and NICN1. As to expression, high expression level is found in brain, testis, liver and kidney. Weak expression in spleen, leukocytes, small intestine and colon.

It localises to the nucleus. The sequence is that of Nicolin-1 (NICN1) from Homo sapiens (Human).